A 66-amino-acid polypeptide reads, in one-letter code: Large ribosomal subunit protein bL28 (66 aa).

It belongs to the bacterial ribosomal protein bL28 family.

In Oenococcus oeni (strain ATCC BAA-331 / PSU-1), this protein is Large ribosomal subunit protein bL28.